Consider the following 193-residue polypeptide: Imidazoleglycerol-phosphate dehydratase (193 aa).

Belongs to the imidazoleglycerol-phosphate dehydratase family.

It is found in the cytoplasm. It carries out the reaction D-erythro-1-(imidazol-4-yl)glycerol 3-phosphate = 3-(imidazol-4-yl)-2-oxopropyl phosphate + H2O. It participates in amino-acid biosynthesis; L-histidine biosynthesis; L-histidine from 5-phospho-alpha-D-ribose 1-diphosphate: step 6/9. The chain is Imidazoleglycerol-phosphate dehydratase from Saccharolobus islandicus (strain Y.N.15.51 / Yellowstone #2) (Sulfolobus islandicus).